Here is a 330-residue protein sequence, read N- to C-terminus: Virulence plasmid integrase pGP8-D (330 aa).

The Core-binding (CB) domain occupies 39 to 124 (FSLFEVIMHW…SYISLTRFLN (86 aa)). The Tyr recombinase domain occupies 152–327 (VKTDAMNSLQ…SREDNASKKM (176 aa)). Catalysis depends on residues Arg-189, Lys-214, His-279, Arg-282, and His-305. Catalysis depends on Tyr-314, which acts as the O-(3'-phospho-DNA)-tyrosine intermediate.

It belongs to the 'phage' integrase family.

The chain is Virulence plasmid integrase pGP8-D from Chlamydia trachomatis serovar L2 (strain ATCC VR-902B / DSM 19102 / 434/Bu).